The primary structure comprises 442 residues: Trigger factor (442 aa).

The PPIase FKBP-type domain occupies Gly-176–Pro-259.

The protein belongs to the FKBP-type PPIase family. Tig subfamily.

It localises to the cytoplasm. It carries out the reaction [protein]-peptidylproline (omega=180) = [protein]-peptidylproline (omega=0). In terms of biological role, involved in protein export. Acts as a chaperone by maintaining the newly synthesized protein in an open conformation. Functions as a peptidyl-prolyl cis-trans isomerase. This chain is Trigger factor, found in Chlamydia trachomatis serovar A (strain ATCC VR-571B / DSM 19440 / HAR-13).